The following is a 192-amino-acid chain: Phosphoheptose isomerase (192 aa).

In terms of domain architecture, SIS spans 34 to 192 (LADALGNGKK…LEKRLFGERR (159 aa)). 49 to 51 (NGG) serves as a coordination point for substrate. Zn(2+) is bound by residues H58 and E62. Substrate is bound by residues E62, 91-92 (ND), 117-119 (STS), S122, and Q169. Zn(2+) is bound by residues Q169 and H177.

This sequence belongs to the SIS family. GmhA subfamily. As to quaternary structure, homotetramer. Requires Zn(2+) as cofactor.

The protein resides in the cytoplasm. It carries out the reaction 2 D-sedoheptulose 7-phosphate = D-glycero-alpha-D-manno-heptose 7-phosphate + D-glycero-beta-D-manno-heptose 7-phosphate. It functions in the pathway carbohydrate biosynthesis; D-glycero-D-manno-heptose 7-phosphate biosynthesis; D-glycero-alpha-D-manno-heptose 7-phosphate and D-glycero-beta-D-manno-heptose 7-phosphate from sedoheptulose 7-phosphate: step 1/1. In terms of biological role, catalyzes the isomerization of sedoheptulose 7-phosphate in D-glycero-D-manno-heptose 7-phosphate. This is Phosphoheptose isomerase from Geotalea daltonii (strain DSM 22248 / JCM 15807 / FRC-32) (Geobacter daltonii).